The chain runs to 884 residues: Probable inorganic carbon transporter subunit DabA (884 aa).

Residues cysteine 390, aspartate 392, histidine 582, and cysteine 597 each contribute to the Zn(2+) site.

Belongs to the inorganic carbon transporter (TC 9.A.2) DabA family. In terms of assembly, forms a complex with DabB. Zn(2+) is required as a cofactor.

The protein resides in the cell membrane. In terms of biological role, part of an energy-coupled inorganic carbon pump. This is Probable inorganic carbon transporter subunit DabA from Staphylococcus saprophyticus subsp. saprophyticus (strain ATCC 15305 / DSM 20229 / NCIMB 8711 / NCTC 7292 / S-41).